We begin with the raw amino-acid sequence, 193 residues long: Cysteine and glycine-rich protein 1 (193 aa).

The LIM zinc-binding 1 domain occupies 10–61 (CGVCQKTVYFAEEVQCEGSSFHKSCFLCLVCKKNLDSTTVAVHGEEIYCKSC). A Nuclear localization signal motif is present at residues 64–69 (KKYGPK). At Ser-81 the chain carries Phosphoserine. N6-acetyllysine occurs at positions 84, 112, 131, 137, and 161. In terms of domain architecture, LIM zinc-binding 2 spans 119–170 (CPRCSQAVYAAEKVIGAGKSWHKSCFRCAKCGKGLESTTLADKDGEIYCKGC). Ser-192 is modified (phosphoserine).

As to quaternary structure, interacts with ASCC1; ASCC2 and TRIP4.

Its subcellular location is the nucleus. Could play a role in neuronal development. The polypeptide is Cysteine and glycine-rich protein 1 (CSRP1) (Bos taurus (Bovine)).